The primary structure comprises 532 residues: Collagen alpha-1(XXIII) chain (532 aa).

The Cytoplasmic portion of the chain corresponds to 1-23; it reads MGAGERAAGGGGTQDPGAGCGAR. Residues 24–45 form a helical; Signal-anchor for type II membrane protein membrane-spanning segment; that stretch reads ALGALCLLLSVGSATACLLLGA. Over 46 to 532 the chain is Extracellular; the sequence is QAAALHGRVA…GLPVPGCWHK (487 aa). Residues 102–532 form a disordered region; sequence PSECICPPGP…GLPVPGCWHK (431 aa). Collagen-like domains are found at residues 108 to 163, 173 to 232, 242 to 297, and 313 to 372; these read PPGP…FGPR, GPPG…PGKK, GLPG…EQGD, and GPPG…MGLS. 2 stretches are compositionally biased toward low complexity: residues 129–145 and 157–172; these read QSGR…DGKP and PGDF…DGAA. Composition is skewed to pro residues over residues 174 to 184, 241 to 250, and 314 to 326; these read PPGPPGPPGAR, PGLPGPPGPK, and PPGP…PPGI. Basic and acidic residues-rich tracts occupy residues 342-354 and 380-393; these read DGEK…KGDP and PKGE…DHLQ. The segment covering 403-414 has biased composition (pro residues); the sequence is PGPPGPPGPPGP. Collagen-like domains are found at residues 404-452 and 455-514; these read GPPG…GPPG and GLPG…PGLD. Composition is skewed to basic and acidic residues over residues 427 to 441 and 478 to 495; these read DGAK…ERGP and RGEK…ERGV.

Homotrimer. Post-translationally, undergoes proteolytic cleavage by furin protease to yield a 60 kDa soluble form that forms a homotrimer and exhibits a low affinity interaction with heparin.

It localises to the cell membrane. This is Collagen alpha-1(XXIII) chain (Col23a1) from Rattus norvegicus (Rat).